The primary structure comprises 351 residues: Ribonucleoside-diphosphate reductase subunit beta (351 aa).

Positions 94, 124, and 127 each coordinate Fe cation. Residue Tyr-131 is part of the active site. Glu-191, Glu-225, and His-228 together coordinate Fe cation.

Belongs to the ribonucleoside diphosphate reductase small chain family. In terms of assembly, tetramer of two alpha and two beta subunits. It depends on Fe cation as a cofactor.

The enzyme catalyses a 2'-deoxyribonucleoside 5'-diphosphate + [thioredoxin]-disulfide + H2O = a ribonucleoside 5'-diphosphate + [thioredoxin]-dithiol. Its function is as follows. Provides the precursors necessary for DNA synthesis. Catalyzes the biosynthesis of deoxyribonucleotides from the corresponding ribonucleotides. The sequence is that of Ribonucleoside-diphosphate reductase subunit beta (nrdB) from Treponema pallidum (strain Nichols).